The following is a 484-amino-acid chain: UDP-N-acetylmuramoyl-L-alanyl-D-glutamate--2,6-diaminopimelate ligase (484 aa).

An ATP-binding site is contributed by 110 to 116; sequence GTNGKTT. Residues 152–153, serine 179, and arginine 187 each bind UDP-N-acetyl-alpha-D-muramoyl-L-alanyl-D-glutamate; that span reads TT. Lysine 219 carries the N6-carboxylysine modification. Residues arginine 381, 405–408, glycine 455, and glutamate 459 each bind meso-2,6-diaminopimelate; that span reads DNPR. Positions 405 to 408 match the Meso-diaminopimelate recognition motif motif; that stretch reads DNPR.

This sequence belongs to the MurCDEF family. MurE subfamily. It depends on Mg(2+) as a cofactor. Carboxylation is probably crucial for Mg(2+) binding and, consequently, for the gamma-phosphate positioning of ATP.

Its subcellular location is the cytoplasm. The catalysed reaction is UDP-N-acetyl-alpha-D-muramoyl-L-alanyl-D-glutamate + meso-2,6-diaminopimelate + ATP = UDP-N-acetyl-alpha-D-muramoyl-L-alanyl-gamma-D-glutamyl-meso-2,6-diaminopimelate + ADP + phosphate + H(+). It participates in cell wall biogenesis; peptidoglycan biosynthesis. In terms of biological role, catalyzes the addition of meso-diaminopimelic acid to the nucleotide precursor UDP-N-acetylmuramoyl-L-alanyl-D-glutamate (UMAG) in the biosynthesis of bacterial cell-wall peptidoglycan. The polypeptide is UDP-N-acetylmuramoyl-L-alanyl-D-glutamate--2,6-diaminopimelate ligase (Clostridium perfringens (strain 13 / Type A)).